We begin with the raw amino-acid sequence, 311 residues long: 3'(2'),5'-bisphosphate nucleotidase 1 (311 aa).

Asp-49 acts as the Proton acceptor in catalysis. Mg(2+) is bound by residues Glu-72, Asp-116, Leu-118, and Asp-119. Thr-121 functions as the Proton acceptor in the catalytic mechanism. AMP is bound by residues Thr-202, His-205, Gly-227, and Lys-231. Asp-254 is a binding site for Mg(2+).

This sequence belongs to the inositol monophosphatase superfamily. The cofactor is Mg(2+).

The catalysed reaction is adenosine 3',5'-bisphosphate + H2O = AMP + phosphate. It catalyses the reaction adenosine 2',5'-bisphosphate + H2O = AMP + phosphate. It carries out the reaction 3'-phosphoadenylyl sulfate + H2O = adenosine 5'-phosphosulfate + phosphate. The enzyme catalyses 1D-myo-inositol 1,4-bisphosphate + H2O = 1D-myo-inositol 4-phosphate + phosphate. The catalysed reaction is 1D-myo-inositol 1,3,4-trisphosphate + H2O = 1D-myo-inositol 3,4-bisphosphate + phosphate. Its activity is regulated as follows. Inhibited by Li(+) and Ca(2+), but not by Na(+). Its function is as follows. Phosphatase that converts 3'(2')-phosphoadenosine 5'-phosphate (PAP) to AMP and adenosine 3'-phosphate 5'-phosphosulfate (PAPS) to adenosine 5'-phosphosulfate (APS). Is also able to hydrolyze inositol 1,4-bisphosphate (Ins(1,4)P2) and inositol 1,3,4-trisphosphate (Ins(1,3,4)P3), but is not active on AMP, 3'-AMP, fructose-1,6-bisphosphate, Ins(1)P, Ins(2)P and Ins(1,4,5)P3. Probably prevents the toxic accumulation of PAP, a compound which inhibits a variety of proteins, including PAPS-utilizing enzymes such as sulfotransferases, and RNA processing enzymes. Could also play a role in inositol recycling and phosphoinositide metabolism. This is 3'(2'),5'-bisphosphate nucleotidase 1 (bpnt1) from Dictyostelium discoideum (Social amoeba).